The chain runs to 628 residues: Rac GTPase-activating protein 1 (628 aa).

Methionine 1 carries the post-translational modification N-acetylmethionine. Residues 33–110 (QVVKDFEDFR…IQLIRDILMC (78 aa)) adopt a coiled-coil conformation. Residues 107-286 (ILMCDTSGSI…GTPQNTGGMR (180 aa)) form an interaction with SLC26A8 region. Serine 150 carries the phosphoserine; by PLK1 modification. A Phosphoserine modification is found at serine 155. Serine 158 carries the phosphoserine; by PLK1 modification. A Phosphothreonine modification is found at threonine 162. 2 positions are modified to phosphoserine; by PLK1: serine 165 and serine 171. A disordered region spans residues 179 to 201 (KKREKRRSNSRQFIDGPPGPVKK). A phosphoserine mark is found at serine 204, serine 207, and serine 215. The segment at 242–284 (SWTRSRGKSGPLQPVNSDSALNSRPLEPRTDTDNLGTPQNTGG) is disordered. Lysine 249 is covalently cross-linked (Glycyl lysine isopeptide (Lys-Gly) (interchain with G-Cter in SUMO2)). Phosphoserine is present on serine 258. Residues 274 to 283 (DNLGTPQNTG) show a composition bias toward polar residues. The segment at 287 to 336 (LHDFVSKTVIKPESCVPCGKRIKFGKLSLKCRDCRLVSHPECRDRCPLPC) adopts a Phorbol-ester/DAG-type zinc-finger fold. Phosphothreonine is present on threonine 343. Positions 350–540 (GMLADFVSQA…RLLSLPLEYW (191 aa)) constitute a Rho-GAP domain. Serine 388 is subject to Phosphoserine; by AURKB. Lysine 405 is covalently cross-linked (Glycyl lysine isopeptide (Lys-Gly) (interchain with G-Cter in SUMO2)). Serine 411 carries the post-translational modification Phosphoserine; by AURKB. 4 positions are modified to phosphothreonine: threonine 564, threonine 577, threonine 585, and threonine 602.

Heterotetramer of two molecules each of RACGAP1 and KIF23. Found in the centralspindlin complex. Associates with alpha-, beta- and gamma-tubulin and microtubules. Interacts via its Rho-GAP domain with RND2. Associates with AURKB during M phase. Interacts via its Rho-GAP domain and basic region with PRC1. The interaction with PRC1 inhibits its GAP activity towards CDC42 in vitro, which may be required for maintaining normal spindle morphology. Interacts with SLC26A8 via its N-terminus. Interacts with ECT2; the interaction is direct, occurs at anaphase and during cytokinesis in a microtubule-dependent manner, is enhanced by phosphorylation by PLK1 and phosphorylation at Ser-165 plays a major role in mediating binding. Interacts with RAB11FIP3; the interaction occurs at late telophase. Interacts with KIF23; the interaction is direct. In terms of processing, phosphorylated at multiple sites in the midbody during cytokinesis. Phosphorylation by AURKB on Ser-388 at the midbody is, at least in part, responsible for exerting its latent GAP activity towards RhoA. Phosphorylation on multiple serine residues by PLK1 enhances its association with ECT2 and is critical for cleavage furrow formation. Phosphorylation on Ser-165 plays a major role in mediating interaction with ECT2. Phosphorylation on Ser-158 does not appear to contribute to binding to ECT2. In terms of tissue distribution, highly expressed in testis, thymus and spleen and weakly expressed in brain, heart, skeletal muscle and kidney. In testis, expression is restricted to germ cells with the highest levels of expression found in spermatocytes. Not detected in adult liver. Also expressed in fetal liver and in several hematopoietic cell lines.

The protein localises to the nucleus. Its subcellular location is the cytoplasm. It localises to the cytoskeleton. It is found in the spindle. The protein resides in the cytoplasmic vesicle. The protein localises to the secretory vesicle. Its subcellular location is the acrosome. It localises to the cleavage furrow. It is found in the midbody. The protein resides in the midbody ring. The protein localises to the cell membrane. In terms of biological role, component of the centralspindlin complex that serves as a microtubule-dependent and Rho-mediated signaling required for the myosin contractile ring formation during the cell cycle cytokinesis. Required for proper attachment of the midbody to the cell membrane during cytokinesis. Sequentially binds to ECT2 and RAB11FIP3 which regulates cleavage furrow ingression and abscission during cytokinesis. Plays key roles in controlling cell growth and differentiation of hematopoietic cells through mechanisms other than regulating Rac GTPase activity. Has a critical role in erythropoiesis. Also involved in the regulation of growth-related processes in adipocytes and myoblasts. May be involved in regulating spermatogenesis and in the RACGAP1 pathway in neuronal proliferation. Shows strong GAP (GTPase activation) activity towards CDC42 and RAC1 and less towards RHOA. Essential for the early stages of embryogenesis. May play a role in regulating cortical activity through RHOA during cytokinesis. May participate in the regulation of sulfate transport in male germ cells. This Mus musculus (Mouse) protein is Rac GTPase-activating protein 1.